Consider the following 215-residue polypeptide: Protein-L-isoaspartate O-methyltransferase (215 aa).

S62 is an active-site residue.

The protein belongs to the methyltransferase superfamily. L-isoaspartyl/D-aspartyl protein methyltransferase family.

The protein localises to the cytoplasm. It catalyses the reaction [protein]-L-isoaspartate + S-adenosyl-L-methionine = [protein]-L-isoaspartate alpha-methyl ester + S-adenosyl-L-homocysteine. Functionally, catalyzes the methyl esterification of L-isoaspartyl residues in peptides and proteins that result from spontaneous decomposition of normal L-aspartyl and L-asparaginyl residues. It plays a role in the repair and/or degradation of damaged proteins. This Bradyrhizobium sp. (strain ORS 278) protein is Protein-L-isoaspartate O-methyltransferase.